We begin with the raw amino-acid sequence, 318 residues long: Acetyl-coenzyme A carboxylase carboxyl transferase subunit alpha (318 aa).

Residues 32–293 (NINEEIQRLE…REALREEWAR (262 aa)) enclose the CoA carboxyltransferase C-terminal domain.

It belongs to the AccA family. As to quaternary structure, acetyl-CoA carboxylase is a heterohexamer composed of biotin carboxyl carrier protein (AccB), biotin carboxylase (AccC) and two subunits each of ACCase subunit alpha (AccA) and ACCase subunit beta (AccD).

Its subcellular location is the cytoplasm. It carries out the reaction N(6)-carboxybiotinyl-L-lysyl-[protein] + acetyl-CoA = N(6)-biotinyl-L-lysyl-[protein] + malonyl-CoA. It participates in lipid metabolism; malonyl-CoA biosynthesis; malonyl-CoA from acetyl-CoA: step 1/1. Component of the acetyl coenzyme A carboxylase (ACC) complex. First, biotin carboxylase catalyzes the carboxylation of biotin on its carrier protein (BCCP) and then the CO(2) group is transferred by the carboxyltransferase to acetyl-CoA to form malonyl-CoA. The protein is Acetyl-coenzyme A carboxylase carboxyl transferase subunit alpha of Halorhodospira halophila (strain DSM 244 / SL1) (Ectothiorhodospira halophila (strain DSM 244 / SL1)).